The sequence spans 258 residues: Axonemal dynein light intermediate polypeptide 1 (258 aa).

2 disordered regions span residues 19–60 and 207–231; these read RNTE…CVPD and VNEQ…EEKK. Positions 34 to 48 are enriched in low complexity; sequence SPQQPGPSGSAPQLP. Residues 176 to 255 adopt a coiled-coil conformation; it reads MRKALQAEQG…LKAQLEGIIA (80 aa).

This sequence belongs to the inner dynein arm light chain family. As to quaternary structure, interacts with CFAP45. Interacts with DYNC1H1.

It localises to the cell projection. It is found in the cilium. Its subcellular location is the flagellum. The protein localises to the dynein axonemal particle. The protein resides in the cytoplasm. Its function is as follows. Involved in sperm flagellum assembly. The chain is Axonemal dynein light intermediate polypeptide 1 (DNALI1) from Macaca fascicularis (Crab-eating macaque).